A 240-amino-acid chain; its full sequence is 7-cyano-7-deazaguanine synthase (240 aa).

Residue 14-24 coordinates ATP; that stretch reads FSGGQDSATCL. Positions 202, 217, 220, and 223 each coordinate Zn(2+).

It belongs to the QueC family. It depends on Zn(2+) as a cofactor.

The enzyme catalyses 7-carboxy-7-deazaguanine + NH4(+) + ATP = 7-cyano-7-deazaguanine + ADP + phosphate + H2O + H(+). It functions in the pathway purine metabolism; 7-cyano-7-deazaguanine biosynthesis. Its function is as follows. Catalyzes the ATP-dependent conversion of 7-carboxy-7-deazaguanine (CDG) to 7-cyano-7-deazaguanine (preQ(0)). The sequence is that of 7-cyano-7-deazaguanine synthase from Rhodopseudomonas palustris (strain BisB18).